Here is a 439-residue protein sequence, read N- to C-terminus: Glutamate--tRNA ligase 2 (439 aa).

The short motif at 6–16 is the 'HIGH' region element; it reads PSPTGDMHIGN. The 'KMSKS' region signature appears at 232–236; sequence KMSKR. Residue Lys-235 participates in ATP binding.

It belongs to the class-I aminoacyl-tRNA synthetase family. Glutamate--tRNA ligase type 1 subfamily. Monomer.

It localises to the cytoplasm. It carries out the reaction tRNA(Glu) + L-glutamate + ATP = L-glutamyl-tRNA(Glu) + AMP + diphosphate. In terms of biological role, catalyzes the attachment of glutamate to tRNA(Glu) in a two-step reaction: glutamate is first activated by ATP to form Glu-AMP and then transferred to the acceptor end of tRNA(Glu). This chain is Glutamate--tRNA ligase 2, found in Helicobacter pylori (strain HPAG1).